Reading from the N-terminus, the 90-residue chain is ATP synthase subunit c (90 aa).

Transmembrane regions (helical) follow at residues 4–24 (FVYS…GCGI) and 53–73 (IGLA…LILI).

Belongs to the ATPase C chain family. In terms of assembly, F-type ATPases have 2 components, F(1) - the catalytic core - and F(0) - the membrane proton channel. F(1) has five subunits: alpha(3), beta(3), gamma(1), delta(1), epsilon(1). F(0) has three main subunits: a(1), b(2) and c(10-14). The alpha and beta chains form an alternating ring which encloses part of the gamma chain. F(1) is attached to F(0) by a central stalk formed by the gamma and epsilon chains, while a peripheral stalk is formed by the delta and b chains.

Its subcellular location is the cell inner membrane. Functionally, f(1)F(0) ATP synthase produces ATP from ADP in the presence of a proton or sodium gradient. F-type ATPases consist of two structural domains, F(1) containing the extramembraneous catalytic core and F(0) containing the membrane proton channel, linked together by a central stalk and a peripheral stalk. During catalysis, ATP synthesis in the catalytic domain of F(1) is coupled via a rotary mechanism of the central stalk subunits to proton translocation. Its function is as follows. Key component of the F(0) channel; it plays a direct role in translocation across the membrane. A homomeric c-ring of between 10-14 subunits forms the central stalk rotor element with the F(1) delta and epsilon subunits. The polypeptide is ATP synthase subunit c (Syntrophobacter fumaroxidans (strain DSM 10017 / MPOB)).